Consider the following 303-residue polypeptide: Aspartate carbamoyltransferase catalytic subunit (303 aa).

Carbamoyl phosphate is bound by residues arginine 48 and threonine 49. Lysine 76 serves as a coordination point for L-aspartate. Positions 98, 129, and 132 each coordinate carbamoyl phosphate. L-aspartate-binding residues include arginine 162 and arginine 214. The carbamoyl phosphate site is built by alanine 257 and proline 258.

Belongs to the aspartate/ornithine carbamoyltransferase superfamily. ATCase family. Heterododecamer (2C3:3R2) of six catalytic PyrB chains organized as two trimers (C3), and six regulatory PyrI chains organized as three dimers (R2).

It catalyses the reaction carbamoyl phosphate + L-aspartate = N-carbamoyl-L-aspartate + phosphate + H(+). The protein operates within pyrimidine metabolism; UMP biosynthesis via de novo pathway; (S)-dihydroorotate from bicarbonate: step 2/3. Catalyzes the condensation of carbamoyl phosphate and aspartate to form carbamoyl aspartate and inorganic phosphate, the committed step in the de novo pyrimidine nucleotide biosynthesis pathway. The chain is Aspartate carbamoyltransferase catalytic subunit from Leuconostoc citreum (strain KM20).